A 293-amino-acid chain; its full sequence is Elongation factor Ts (293 aa).

Positions Thr-79 to Val-82 are involved in Mg(2+) ion dislocation from EF-Tu.

This sequence belongs to the EF-Ts family.

It is found in the cytoplasm. Associates with the EF-Tu.GDP complex and induces the exchange of GDP to GTP. It remains bound to the aminoacyl-tRNA.EF-Tu.GTP complex up to the GTP hydrolysis stage on the ribosome. This is Elongation factor Ts from Bacillus licheniformis (strain ATCC 14580 / DSM 13 / JCM 2505 / CCUG 7422 / NBRC 12200 / NCIMB 9375 / NCTC 10341 / NRRL NRS-1264 / Gibson 46).